The following is a 247-amino-acid chain: 1-(5-phosphoribosyl)-5-[(5-phosphoribosylamino)methylideneamino] imidazole-4-carboxamide isomerase (247 aa).

Catalysis depends on Asp-8, which acts as the Proton acceptor. Asp-130 serves as the catalytic Proton donor.

This sequence belongs to the HisA/HisF family.

The protein localises to the cytoplasm. It catalyses the reaction 1-(5-phospho-beta-D-ribosyl)-5-[(5-phospho-beta-D-ribosylamino)methylideneamino]imidazole-4-carboxamide = 5-[(5-phospho-1-deoxy-D-ribulos-1-ylimino)methylamino]-1-(5-phospho-beta-D-ribosyl)imidazole-4-carboxamide. Its pathway is amino-acid biosynthesis; L-histidine biosynthesis; L-histidine from 5-phospho-alpha-D-ribose 1-diphosphate: step 4/9. This chain is 1-(5-phosphoribosyl)-5-[(5-phosphoribosylamino)methylideneamino] imidazole-4-carboxamide isomerase, found in Leptospira biflexa serovar Patoc (strain Patoc 1 / Ames).